Here is a 352-residue protein sequence, read N- to C-terminus: tRNA N6-adenosine threonylcarbamoyltransferase (352 aa).

Residues His-117 and His-121 each contribute to the Fe cation site. Residues 140 to 144, Asp-173, Gly-186, and Asn-287 contribute to the substrate site; that span reads LVSGG. Asp-315 serves as a coordination point for Fe cation.

The protein belongs to the KAE1 / TsaD family. Fe(2+) serves as cofactor.

It is found in the cytoplasm. It catalyses the reaction L-threonylcarbamoyladenylate + adenosine(37) in tRNA = N(6)-L-threonylcarbamoyladenosine(37) in tRNA + AMP + H(+). Functionally, required for the formation of a threonylcarbamoyl group on adenosine at position 37 (t(6)A37) in tRNAs that read codons beginning with adenine. Is involved in the transfer of the threonylcarbamoyl moiety of threonylcarbamoyl-AMP (TC-AMP) to the N6 group of A37, together with TsaE and TsaB. TsaD likely plays a direct catalytic role in this reaction. This Psychrobacter cryohalolentis (strain ATCC BAA-1226 / DSM 17306 / VKM B-2378 / K5) protein is tRNA N6-adenosine threonylcarbamoyltransferase.